The primary structure comprises 378 residues: Chaperone protein DnaJ (378 aa).

In terms of domain architecture, J spans 5–70 (DYYEVLSVGR…DKKAAYDQFG (66 aa)). A CR-type zinc finger spans residues 133-211 (GLTKELRIPT…CHGEGRVEKS (79 aa)). Positions 146, 149, 163, 166, 185, 188, 199, and 202 each coordinate Zn(2+). CXXCXGXG motif repeat units lie at residues 146-153 (CDTCDGSG), 163-170 (CGTCHGQG), 185-192 (CPTCHGRG), and 199-206 (CNSCHGEG).

This sequence belongs to the DnaJ family. In terms of assembly, homodimer. Requires Zn(2+) as cofactor.

The protein localises to the cytoplasm. Functionally, participates actively in the response to hyperosmotic and heat shock by preventing the aggregation of stress-denatured proteins and by disaggregating proteins, also in an autonomous, DnaK-independent fashion. Unfolded proteins bind initially to DnaJ; upon interaction with the DnaJ-bound protein, DnaK hydrolyzes its bound ATP, resulting in the formation of a stable complex. GrpE releases ADP from DnaK; ATP binding to DnaK triggers the release of the substrate protein, thus completing the reaction cycle. Several rounds of ATP-dependent interactions between DnaJ, DnaK and GrpE are required for fully efficient folding. Also involved, together with DnaK and GrpE, in the DNA replication of plasmids through activation of initiation proteins. The polypeptide is Chaperone protein DnaJ (Shewanella woodyi (strain ATCC 51908 / MS32)).